The chain runs to 103 residues: Nucleoid-associated protein BH0035 (103 aa).

Over residues 1-20 (MKNMGQMMKQMQKMQKQMMK) the composition is skewed to low complexity. The interval 1–29 (MKNMGQMMKQMQKMQKQMMKAQEELKEKT) is disordered.

Belongs to the YbaB/EbfC family. In terms of assembly, homodimer.

The protein localises to the cytoplasm. Its subcellular location is the nucleoid. Functionally, binds to DNA and alters its conformation. May be involved in regulation of gene expression, nucleoid organization and DNA protection. This chain is Nucleoid-associated protein BH0035, found in Halalkalibacterium halodurans (strain ATCC BAA-125 / DSM 18197 / FERM 7344 / JCM 9153 / C-125) (Bacillus halodurans).